Here is a 184-residue protein sequence, read N- to C-terminus: Large ribosomal subunit protein uL18 (184 aa).

The protein belongs to the universal ribosomal protein uL18 family. As to quaternary structure, part of the 50S ribosomal subunit. Contacts the 5S and 23S rRNAs.

In terms of biological role, this is one of the proteins that bind and probably mediate the attachment of the 5S RNA into the large ribosomal subunit, where it forms part of the central protuberance. The protein is Large ribosomal subunit protein uL18 of Haloferax mediterranei (strain ATCC 33500 / DSM 1411 / JCM 8866 / NBRC 14739 / NCIMB 2177 / R-4) (Halobacterium mediterranei).